The following is a 507-amino-acid chain: 3-[(3aS,4S,7aS)-7a-methyl-1,5-dioxo-octahydro-1H-inden-4-yl]propanoyl:CoA ligase (507 aa).

Residues 177 to 185 (TSGTTGRSK), Asp-391, Arg-406, and Lys-497 each bind ATP.

The protein belongs to the ATP-dependent AMP-binding enzyme family.

The enzyme catalyses 3-[(3aS,4S,7aS)-7a-methyl-1,5-dioxo-octahydro-1H-inden-4-yl]propanoate + ATP + CoA = 3-[(3aS,4S,7aS)-7a-methyl-1,5-dioxo-octahydro-1H-inden-4-yl]propanoyl-CoA + AMP + diphosphate. It catalyses the reaction 5-hydroxy-3-[(3aS,4S,5R,7aS)-7a-methyl-1,5-dioxo-octahydro-1H-inden-4-yl]propanoate + ATP + CoA = 3-[(3aS,4S,5R,7aS)-5-hydroxy-7a-methyl-1-oxo-octahydro-1H-inden-4-yl]propanoyl-CoA + AMP + diphosphate. Involved in the catabolism of the rings C and D of cholesterol. Catalyzes the ATP-dependent CoA thioesterification of 3aalpha-H-4alpha(3'-propanoate)-7abeta-methylhexahydro-1,5-indanedione (HIP) to yield HIP-CoA. It can also use the hydroxylated analogs of HIP, 5alpha-OH HIP and 1beta-OH HIP. It requires that the side chain at C17 is completely removed. The protein is 3-[(3aS,4S,7aS)-7a-methyl-1,5-dioxo-octahydro-1H-inden-4-yl]propanoyl:CoA ligase of Mycobacterium tuberculosis (strain ATCC 25618 / H37Rv).